The primary structure comprises 549 residues: CTP synthase (549 aa).

Residues 1-272 (MPPKSSTTKH…DAYVVRRMDL (272 aa)) form an amidoligase domain region. Ser-19 lines the CTP pocket. Ser-19 serves as a coordination point for UTP. ATP contacts are provided by residues 20–25 (SLGKGL) and Asp-77. The Mg(2+) site is built by Asp-77 and Glu-146. Residues 153–155 (DIE), 193–198 (KTKPTQ), and Lys-229 each bind CTP. UTP contacts are provided by residues 193-198 (KTKPTQ) and Lys-229. The Glutamine amidotransferase type-1 domain maps to 301-548 (VGKYIDLPDA…VKAAVERKTS (248 aa)). L-glutamine is bound at residue Gly-360. The active-site Nucleophile; for glutamine hydrolysis is the Cys-387. Residues 388 to 391 (LGLQ), Glu-411, and Arg-473 each bind L-glutamine. Active-site residues include His-521 and Glu-523.

Belongs to the CTP synthase family. Homotetramer.

The catalysed reaction is UTP + L-glutamine + ATP + H2O = CTP + L-glutamate + ADP + phosphate + 2 H(+). It carries out the reaction L-glutamine + H2O = L-glutamate + NH4(+). The enzyme catalyses UTP + NH4(+) + ATP = CTP + ADP + phosphate + 2 H(+). Its pathway is pyrimidine metabolism; CTP biosynthesis via de novo pathway; CTP from UDP: step 2/2. Allosterically activated by GTP, when glutamine is the substrate; GTP has no effect on the reaction when ammonia is the substrate. The allosteric effector GTP functions by stabilizing the protein conformation that binds the tetrahedral intermediate(s) formed during glutamine hydrolysis. Inhibited by the product CTP, via allosteric rather than competitive inhibition. Functionally, catalyzes the ATP-dependent amination of UTP to CTP with either L-glutamine or ammonia as the source of nitrogen. Regulates intracellular CTP levels through interactions with the four ribonucleotide triphosphates. The protein is CTP synthase of Streptomyces coelicolor (strain ATCC BAA-471 / A3(2) / M145).